We begin with the raw amino-acid sequence, 337 residues long: Transcription initiation factor IIB (337 aa).

The TFIIB-type zinc-finger motif lies at 36-68 (SVQSVCPECGSRQLVHDYERAELVCQNCGLVLD). 4 residues coordinate Zn(2+): Cys41, Cys44, Cys60, and Cys63. Tandem repeats lie at residues 154-237 (SELD…SREL) and 248-329 (DYVP…ELAE).

This sequence belongs to the TFIIB family.

Stabilizes TBP binding to an archaeal box-A promoter. Also responsible for recruiting RNA polymerase II to the pre-initiation complex (DNA-TBP-TFIIB). The protein is Transcription initiation factor IIB of Methanoculleus marisnigri (strain ATCC 35101 / DSM 1498 / JR1).